Here is a 309-residue protein sequence, read N- to C-terminus: Serine/threonine-protein phosphatase 2A catalytic subunit alpha isoform (309 aa).

The Mn(2+) site is built by Asp57, His59, Asp85, and Asn117. Asp57, His59, and Asp85 together coordinate Zn(2+). Fe(3+)-binding residues include Asp85 and Asn117. The Proton donor role is filled by His118. His167 and His241 together coordinate Mn(2+). The Fe(3+) site is built by His167 and His241. Tyr307 is subject to Phosphotyrosine. Leu309 carries the post-translational modification Leucine methyl ester.

The protein belongs to the PPP phosphatase family. PP-1 subfamily. As to quaternary structure, PP2A consists of a common heterodimeric core enzyme composed of PPP2CA, a 36 kDa catalytic subunit (subunit C), and PPP2R1A, a 65 kDa constant regulatory subunit (PR65 or subunit A), that associates with a variety of regulatory subunits. Proteins that associate with the core dimer include three families of regulatory subunits B (the R2/B/PR55/B55, R3/B''/PR72/PR130/PR59 and R5/B'/B56 families), the 48 kDa variable regulatory subunit, viral proteins, and cell signaling molecules. Interacts with the PP2A A subunit PPP2R1A. Interacts with the regulatory subunit PPP2R2A. Interacts (via C-terminus) with PTPA. Interacts with NXN; the interaction is direct. Interacts with KCTD20. Interacts with BTBD10. Interacts with SGO1 and SGO2. Interacts with RAF1. Interaction with IGBP1 protects unassembled PPP2CA from degradative ubiquitination. Interacts with GSK3B (via C2 domain). Interacts with MFHAS1; retains PPP2CA into the cytoplasm and excludes it from the nucleus. Interacts with PABIR1/FAM122A. Interacts with ADCY8; interaction is phosphatase activity-dependent; antagonizes interaction between ADCY8 and calmodulin. Interacts with CRTC3 (when phosphorylated at 'Ser-391'). Interacts with SPRY2; the interaction is inhibited by TESK1 interaction with SPRY2, possibly by vesicular sequestration of SPRY2. Interacts with TRAF3IP3. Interacts with AMBRA1 (via PxP motifs); enhancing interaction between PPP2CA and MYC or FOXO3. Forms a complex with AMBRA1 and BECN1; AMBRA1 and BECN1 components of the complex regulate MYC stability via different pathways. Part of the core of STRIPAK complexes composed of PP2A catalytic and scaffolding subunits, the striatins (PP2A regulatory subunits), the striatin-associated proteins MOB4, STRIP1 and STRIP2, PDCD10 and members of the STE20 kinases, such as STK24 and STK26. Phosphatase component of the Integrator-PP2A (INTAC) complex, composed of the Integrator core complex and protein phosphatase 2A subunits PPP2CA and PPP2R1A. Mn(2+) serves as cofactor. It depends on Fe(3+) as a cofactor. Requires Zn(2+) as cofactor. In terms of processing, reversibly methyl esterified on Leu-309 by leucine carboxyl methyltransferase 1 (Lcmt1) and protein phosphatase methylesterase 1 (Ppme1). Carboxyl methylation influences the affinity of the catalytic subunit for the different regulatory subunits, thereby modulating the PP2A holoenzyme's substrate specificity, enzyme activity and cellular localization. Phosphorylation of either threonine (by autophosphorylation-activated protein kinase) or tyrosine results in inactivation of the phosphatase. Auto-dephosphorylation has been suggested as a mechanism for reactivation. Post-translationally, polyubiquitinated, leading to its degradation by the proteasome.

It is found in the cytoplasm. The protein resides in the nucleus. Its subcellular location is the chromosome. The protein localises to the centromere. It localises to the cytoskeleton. It is found in the spindle pole. The catalysed reaction is O-phospho-L-seryl-[protein] + H2O = L-seryl-[protein] + phosphate. It carries out the reaction O-phospho-L-threonyl-[protein] + H2O = L-threonyl-[protein] + phosphate. Its activity is regulated as follows. Inhibited by the interaction between PPP2R2A and ARPP19; this inhibition is enhanced when ARPP19 is phosphorylated. Inhibited by the interaction between PPP2R2A and PABIR1/FAM122A. Catalytic subunit of protein phosphatase 2A (PP2A), a serine/threonine phosphatase involved in the regulation of a wide variety of enzymes, signal transduction pathways, and cellular events. PP2A is the major phosphatase for microtubule-associated proteins (MAPs). PP2A can modulate the activity of phosphorylase B kinase casein kinase 2, mitogen-stimulated S6 kinase, and MAP-2 kinase. Cooperates with SGO2 to protect centromeric cohesin from separase-mediated cleavage in oocytes specifically during meiosis I. Can dephosphorylate various proteins, such as AXIN1, p53/TP53, PIM3, WEE1. Activates RAF1 by dephosphorylating it at 'Ser-259'. Mediates dephosphorylation of WEE1, preventing its ubiquitin-mediated proteolysis, increasing WEE1 protein levels, and promoting the G2/M checkpoint. Mediates dephosphorylation of MYC; promoting its ubiquitin-mediated proteolysis: interaction with AMBRA1 enhances interaction between PPP2CA and MYC. Mediates dephosphorylation of FOXO3; promoting its stabilization: interaction with AMBRA1 enhances interaction between PPP2CA and FOXO3. Catalyzes dephosphorylation of the pyrin domain of NLRP3, promoting assembly of the NLRP3 inflammasome. Together with RACK1 adapter, mediates dephosphorylation of AKT1 at 'Ser-473', preventing AKT1 activation and AKT-mTOR signaling pathway. Dephosphorylation of AKT1 is essential for regulatory T-cells (Treg) homeostasis and stability. Catalyzes dephosphorylation of PIM3, promotinh PIM3 ubiquitination and proteasomal degradation. Part of the striatin-interacting phosphatase and kinase (STRIPAK) complexes. STRIPAK complexes have critical roles in protein (de)phosphorylation and are regulators of multiple signaling pathways including Hippo, MAPK, nuclear receptor and cytoskeleton remodeling. Different types of STRIPAK complexes are involved in a variety of biological processes such as cell growth, differentiation, apoptosis, metabolism and immune regulation. Key mediator of a quality checkpoint during transcription elongation as part of the Integrator-PP2A (INTAC) complex. The INTAC complex drives premature transcription termination of transcripts that are unfavorably configured for transcriptional elongation: within the INTAC complex, PPP2CA catalyzes dephosphorylation of the C-terminal domain (CTD) of Pol II subunit POLR2A/RPB1 and SUPT5H/SPT5, thereby preventing transcriptional elongation. This chain is Serine/threonine-protein phosphatase 2A catalytic subunit alpha isoform (Ppp2ca), found in Rattus norvegicus (Rat).